A 302-amino-acid polypeptide reads, in one-letter code: UPF0725 protein At1g23960 (302 aa).

The residue at position 2 (Ala2) is an N-acetylalanine.

The protein belongs to the UPF0725 (EMB2204) family.

The protein is UPF0725 protein At1g23960 of Arabidopsis thaliana (Mouse-ear cress).